A 488-amino-acid polypeptide reads, in one-letter code: Cobyric acid synthase (488 aa).

The region spanning 248-435 (VLKVVVPVLP…LHGLFESPAA (188 aa)) is the GATase cobBQ-type domain. C329 acts as the Nucleophile in catalysis. H427 is an active-site residue.

This sequence belongs to the CobB/CobQ family. CobQ subfamily.

Its pathway is cofactor biosynthesis; adenosylcobalamin biosynthesis. Catalyzes amidations at positions B, D, E, and G on adenosylcobyrinic A,C-diamide. NH(2) groups are provided by glutamine, and one molecule of ATP is hydrogenolyzed for each amidation. This Pseudomonas fluorescens (strain Pf0-1) protein is Cobyric acid synthase.